Consider the following 41-residue polypeptide: Large ribosomal subunit protein bL36 (41 aa).

Belongs to the bacterial ribosomal protein bL36 family.

In Zymomonas mobilis subsp. mobilis (strain ATCC 31821 / ZM4 / CP4), this protein is Large ribosomal subunit protein bL36.